The following is a 122-amino-acid chain: Large ribosomal subunit protein bL12 (122 aa).

The protein belongs to the bacterial ribosomal protein bL12 family. In terms of assembly, homodimer. Part of the ribosomal stalk of the 50S ribosomal subunit. Forms a multimeric L10(L12)X complex, where L10 forms an elongated spine to which 2 to 4 L12 dimers bind in a sequential fashion. Binds GTP-bound translation factors.

Functionally, forms part of the ribosomal stalk which helps the ribosome interact with GTP-bound translation factors. Is thus essential for accurate translation. The sequence is that of Large ribosomal subunit protein bL12 from Shewanella woodyi (strain ATCC 51908 / MS32).